The following is a 164-amino-acid chain: Ribosome maturation factor RimP (164 aa).

This sequence belongs to the RimP family.

The protein resides in the cytoplasm. Functionally, required for maturation of 30S ribosomal subunits. The sequence is that of Ribosome maturation factor RimP from Thermodesulfovibrio yellowstonii (strain ATCC 51303 / DSM 11347 / YP87).